A 90-amino-acid polypeptide reads, in one-letter code: Spore coat protein F-like protein YgzC (90 aa).

Belongs to the CotF family.

The protein localises to the spore coat. In Bacillus subtilis (strain 168), this protein is Spore coat protein F-like protein YgzC (ygzC).